Consider the following 156-residue polypeptide: Small ribosomal subunit protein uS7c (156 aa).

It belongs to the universal ribosomal protein uS7 family. Part of the 30S ribosomal subunit.

Its subcellular location is the plastid. It is found in the chloroplast. One of the primary rRNA binding proteins, it binds directly to 16S rRNA where it nucleates assembly of the head domain of the 30S subunit. The sequence is that of Small ribosomal subunit protein uS7c (rps7) from Cyanidium caldarium (Red alga).